The chain runs to 114 residues: RNA polymerase-binding protein RbpA (114 aa).

It belongs to the RNA polymerase-binding protein RbpA family. As to quaternary structure, monomer. Forms a complex with the RNAP catalytic core, specifically with the beta subunit (RpoB); its binding site may overlap with that of Rif. May bind free principal sigma factors.

Binds to RNA polymerase (RNAP), probably stimulating transcriptions from principal, but not alternative sigma factor promoters. Partially restores transcription in the presence of rifampicin (Rif) in vitro; overexpression leads to an increase in the Rif tolerance in vivo, with smaller colonies. Seems to act by removing Rif from its binding site and preventing its further binding. No longer stimulates transcription in Rif-resistant RNA polymerase (with mutations in rpoB). The polypeptide is RNA polymerase-binding protein RbpA (Mycolicibacterium smegmatis (strain ATCC 700084 / mc(2)155) (Mycobacterium smegmatis)).